We begin with the raw amino-acid sequence, 128 residues long: Large ribosomal subunit protein bL20 (128 aa).

This sequence belongs to the bacterial ribosomal protein bL20 family.

In terms of biological role, binds directly to 23S ribosomal RNA and is necessary for the in vitro assembly process of the 50S ribosomal subunit. It is not involved in the protein synthesizing functions of that subunit. This Anaplasma marginale (strain Florida) protein is Large ribosomal subunit protein bL20.